The following is a 160-amino-acid chain: Iron-sulfur assembly protein IscA1 (160 aa).

Belongs to the HesB/IscA family. In terms of assembly, tetramer.

It is found in the mitochondrion. It participates in cofactor biosynthesis; iron-sulfur cluster biosynthesis. Functionally, participates in iron-sulfur cluster formation (ISC) pathway for iron-sulfur (Fe-S) cluster biogenesis. Can bind iron and [4Fe-4S] clusters. May function as an iron chaperone. This Plasmodium falciparum (isolate 3D7) protein is Iron-sulfur assembly protein IscA1.